We begin with the raw amino-acid sequence, 631 residues long: 1-deoxy-D-xylulose-5-phosphate synthase (631 aa).

Thiamine diphosphate-binding positions include His73 and 114–116; that span reads GHS. A Mg(2+)-binding site is contributed by Asp145. Thiamine diphosphate contacts are provided by residues 146-147, Asn174, Tyr285, and Glu366; that span reads GA. Asn174 is a Mg(2+) binding site.

This sequence belongs to the transketolase family. DXPS subfamily. As to quaternary structure, homodimer. It depends on Mg(2+) as a cofactor. Thiamine diphosphate serves as cofactor.

The catalysed reaction is D-glyceraldehyde 3-phosphate + pyruvate + H(+) = 1-deoxy-D-xylulose 5-phosphate + CO2. It functions in the pathway metabolic intermediate biosynthesis; 1-deoxy-D-xylulose 5-phosphate biosynthesis; 1-deoxy-D-xylulose 5-phosphate from D-glyceraldehyde 3-phosphate and pyruvate: step 1/1. Functionally, catalyzes the acyloin condensation reaction between C atoms 2 and 3 of pyruvate and glyceraldehyde 3-phosphate to yield 1-deoxy-D-xylulose-5-phosphate (DXP). This is 1-deoxy-D-xylulose-5-phosphate synthase from Desulfitobacterium hafniense (strain DSM 10664 / DCB-2).